Here is a 317-residue protein sequence, read N- to C-terminus: Melanocyte-stimulating hormone receptor (317 aa).

The Extracellular segment spans residues 1-37; the sequence is MPVQGSQRRLLGSLNSTPTATPHLGLAANQTGARCLE. N29 carries N-linked (GlcNAc...) asparagine glycosylation. The chain crosses the membrane as a helical span at residues 38-63; the sequence is VSIPDGLFLSLGLVSLVENVLVVTAI. At 64 to 72 the chain is on the cytoplasmic side; it reads AKNRNLHSP. Residues 73 to 93 form a helical membrane-spanning segment; the sequence is MYCFICCLALSDLLVSGSNML. The Extracellular segment spans residues 94 to 118; that stretch reads ETAVILLLEAGALAARAAVVQQLDN. A helical transmembrane segment spans residues 119 to 140; the sequence is VIDVITCSSMLASLCFLGAIAV. Over 141–163 the chain is Cytoplasmic; it reads DRYISIFYALRYHSIVTLPRARR. Residues 164–183 traverse the membrane as a helical segment; it reads AVAAIWVASVLFSMLFIAYY. Residues 184 to 191 are Extracellular-facing; it reads DHAAVLLC. The chain crosses the membrane as a helical span at residues 192–211; that stretch reads LVVFFLAMLVLMAVLYIHML. The Cytoplasmic portion of the chain corresponds to 212-240; the sequence is ARARQHAQGIARLHKRQCPAHQGFGLKGA. A helical transmembrane segment spans residues 241–266; that stretch reads ATLTILLGIFFLCWGPFFLHLTLIVL. Residues 267–279 lie on the Extracellular side of the membrane; sequence CPQHPTCSCIFKN. Residues 280-300 form a helical membrane-spanning segment; sequence FNLFLALIICNAIIDPLIYAF. Residues 301-317 are Cytoplasmic-facing; sequence RSQELRRTLKEVLLCSW. C315 is lipidated: S-palmitoyl cysteine.

The protein belongs to the G-protein coupled receptor 1 family. In terms of assembly, interacts with MGRN1, but does not undergo MGRN1-mediated ubiquitination; this interaction competes with GNAS-binding and thus inhibits agonist-induced cAMP production. Interacts with OPN3; the interaction results in a decrease in MC1R-mediated cAMP signaling and ultimately a decrease in melanin production in melanocytes.

The protein resides in the cell membrane. Its function is as follows. Receptor for MSH (alpha, beta and gamma) and ACTH. The activity of this receptor is mediated by G proteins which activate adenylate cyclase. Mediates melanogenesis, the production of eumelanin (black/brown) and phaeomelanin (red/yellow), via regulation of cAMP signaling in melanocytes. The polypeptide is Melanocyte-stimulating hormone receptor (MC1R) (Cercopithecus mitis (Blue monkey)).